Consider the following 436-residue polypeptide: Hydrogenobyrinate a,c-diamide synthase (436 aa).

One can recognise a GATase cobBQ-type domain in the interval 244 to 435 (RIAVARDDAF…MHVIDFSGEA (192 aa)). The Nucleophile role is filled by Cys-327.

It belongs to the CobB/CbiA family. The cofactor is Mg(2+).

It catalyses the reaction hydrogenobyrinate + 2 L-glutamine + 2 ATP + 2 H2O = hydrogenobyrinate a,c-diamide + 2 L-glutamate + 2 ADP + 2 phosphate + 2 H(+). The protein operates within cofactor biosynthesis; adenosylcobalamin biosynthesis; cob(II)yrinate a,c-diamide from precorrin-2 (aerobic route): step 9/10. Functionally, catalyzes the ATP-dependent amidation of the two carboxylate groups at positions a and c of hydrogenobyrinate, using either L-glutamine or ammonia as the nitrogen source. This is Hydrogenobyrinate a,c-diamide synthase from Brucella suis biovar 1 (strain 1330).